Here is a 298-residue protein sequence, read N- to C-terminus: Ribosomal RNA small subunit methyltransferase H (298 aa).

Residues 31–33 (GGH), Asp50, Tyr80, Asp95, and Gln102 each bind S-adenosyl-L-methionine. The disordered stretch occupies residues 255-298 (AEKDLYGNTNKPFKSVGKAIDPDDEEKERNNRARSARLRIAERE).

This sequence belongs to the methyltransferase superfamily. RsmH family.

It localises to the cytoplasm. The catalysed reaction is cytidine(1402) in 16S rRNA + S-adenosyl-L-methionine = N(4)-methylcytidine(1402) in 16S rRNA + S-adenosyl-L-homocysteine + H(+). In terms of biological role, specifically methylates the N4 position of cytidine in position 1402 (C1402) of 16S rRNA. This chain is Ribosomal RNA small subunit methyltransferase H, found in Cytophaga hutchinsonii (strain ATCC 33406 / DSM 1761 / CIP 103989 / NBRC 15051 / NCIMB 9469 / D465).